We begin with the raw amino-acid sequence, 312 residues long: Malate dehydrogenase (312 aa).

Residues 7–13 (GAAGGIG) and aspartate 34 each bind NAD(+). Substrate is bound by residues arginine 81 and arginine 87. NAD(+) is bound by residues asparagine 94 and 117–119 (ITN). Asparagine 119 and arginine 153 together coordinate substrate. Histidine 177 (proton acceptor) is an active-site residue. Methionine 227 is an NAD(+) binding site.

This sequence belongs to the LDH/MDH superfamily. MDH type 1 family. Homodimer.

The enzyme catalyses (S)-malate + NAD(+) = oxaloacetate + NADH + H(+). In terms of biological role, catalyzes the reversible oxidation of malate to oxaloacetate. This is Malate dehydrogenase from Serratia proteamaculans (strain 568).